A 160-amino-acid chain; its full sequence is Calcium-binding protein CP1 (160 aa).

3 EF-hand domains span residues 22–49, 52–87, and 93–128; these read AFEIIDTDHDGKISSDDLRAFYAGIPSG, NDETMIGTMISVADANKDGFVEFDEFEKVLETTPFS, and GDDGLMKDVFKVMDKDGDGRLSYGDLKSYMDSAGLA. Positions 27, 29, 31, 33, 38, 65, 67, 69, 76, 106, 108, 110, 112, and 117 each coordinate Ca(2+).

As to expression, expressed in roots and flowers.

The protein localises to the cytoplasm. Its subcellular location is the cytosol. Its function is as follows. Binds calcium in vitro. This chain is Calcium-binding protein CP1, found in Arabidopsis thaliana (Mouse-ear cress).